The sequence spans 1396 residues: ABC-type transporter cicA (1396 aa).

The interval 1–40 (MRLSSEAKIAESGGQPPTAGSRSETGSESTEAESADPKAQ) is disordered. Residues 18 to 29 (TAGSRSETGSES) show a composition bias toward low complexity. The next 3 membrane-spanning stretches (helical) occupy residues 142 to 162 (FLLG…APYL), 191 to 211 (GFVV…NQFL), and 300 to 320 (MFHI…LLLV). An ABC transmembrane type-1 1 domain is found at 143-466 (LLGGFCHLIS…LPLVLGQITD (324 aa)). N-linked (GlcNAc...) asparagine glycosylation is present at Asn-321. Helical transmembrane passes span 324 to 344 (YSAL…TYAV), 409 to 429 (ILCV…ITYA), and 440 to 460 (IFSS…LPLV). A compositionally biased stretch (basic and acidic residues) spans 510 to 533 (AADKEAEKVEKKANPRRTEPKSEA). Residues 510 to 543 (AADKEAEKVEKKANPRRTEPKSEAPTDSAESDEP) are disordered. In terms of domain architecture, ABC transporter 1 spans 525-751 (RRTEPKSEAP…NDLFKQLMST (227 aa)). 563 to 570 (GTVGSGKS) contacts ATP. Asn-604 carries an N-linked (GlcNAc...) asparagine glycan. Residues 751–787 (TASQDSKEDEEEATEVVEEEAEKQAQQEPTKPAAALM) form a disordered region. Residues 757-771 (KEDEEEATEVVEEEA) are compositionally biased toward acidic residues. Helical transmembrane passes span 816-836 (LAIL…NLWL) and 852-872 (YIGI…IFST). The ABC transmembrane type-1 2 domain occupies 816–1093 (LAILFLLAFA…TVRQLAEVEN (278 aa)). Asn-880 carries N-linked (GlcNAc...) asparagine glycosylation. 4 helical membrane passes run 930–947 (MYAI…LIIV), 951–970 (YFAI…SNYY), 1036–1056 (LSVR…VLVV), and 1065–1085 (SISG…QFTV). N-linked (GlcNAc...) asparagine glycans are attached at residues Asn-1096, Asn-1150, and Asn-1154. Positions 1131-1380 (ITFDNVAMRY…EDGIFRAMCE (250 aa)) constitute an ABC transporter 2 domain. 1165 to 1172 (GRTGAGKS) is an ATP binding site.

It belongs to the ABC transporter superfamily. ABCC family. Conjugate transporter (TC 3.A.1.208) subfamily.

The protein localises to the cell membrane. ABC-type transporter; part of the gene cluster that mediates the biosynthesis of cichorine, a phytotoxin active against knapweed, corn, and soybeans. CicA is probably involved in the secretion of cichorine. The chain is ABC-type transporter cicA from Emericella nidulans (strain FGSC A4 / ATCC 38163 / CBS 112.46 / NRRL 194 / M139) (Aspergillus nidulans).